The primary structure comprises 266 residues: Na(+)-translocating NADH-quinone reductase subunit C (266 aa).

A helical membrane pass occupies residues 16 to 36; sequence LLVVVILCLVCSVVVAGAAVG. At threonine 232 the chain carries FMN phosphoryl threonine.

The protein belongs to the NqrC family. Composed of six subunits; NqrA, NqrB, NqrC, NqrD, NqrE and NqrF. FMN is required as a cofactor.

Its subcellular location is the cell inner membrane. The enzyme catalyses a ubiquinone + n Na(+)(in) + NADH + H(+) = a ubiquinol + n Na(+)(out) + NAD(+). Its function is as follows. NQR complex catalyzes the reduction of ubiquinone-1 to ubiquinol by two successive reactions, coupled with the transport of Na(+) ions from the cytoplasm to the periplasm. NqrA to NqrE are probably involved in the second step, the conversion of ubisemiquinone to ubiquinol. The chain is Na(+)-translocating NADH-quinone reductase subunit C from Yersinia pestis.